A 359-amino-acid chain; its full sequence is Protein mab-21-like 2 (359 aa).

This sequence belongs to the mab-21 family. In terms of tissue distribution, expressed in the adult cerebellum and eye, with lower levels in the adult forebrain. In embryos at 10.5 days post-coitum strongly expressed in the rostral and distal regions of the developing neural retina, with no expression immediately adjacent to the closing optic fissure. Expression is also observed in the dorsal and ventral aspects of the developing forelimb bud and in the developing pharyngeal arches, as well as in the midbrain.

It is found in the nucleus. It localises to the cytoplasm. Its function is as follows. Required for several aspects of embryonic development including normal development of the eye, notochord, neural tube and other organ tissues, and for embryonic turning. The polypeptide is Protein mab-21-like 2 (Mab21l2) (Mus musculus (Mouse)).